The chain runs to 301 residues: Ribosomal protein L11 methyltransferase (301 aa).

Residues T152, G173, D195, and N236 each coordinate S-adenosyl-L-methionine.

The protein belongs to the methyltransferase superfamily. PrmA family.

It localises to the cytoplasm. It catalyses the reaction L-lysyl-[protein] + 3 S-adenosyl-L-methionine = N(6),N(6),N(6)-trimethyl-L-lysyl-[protein] + 3 S-adenosyl-L-homocysteine + 3 H(+). In terms of biological role, methylates ribosomal protein L11. In Dictyoglomus thermophilum (strain ATCC 35947 / DSM 3960 / H-6-12), this protein is Ribosomal protein L11 methyltransferase.